The following is a 147-amino-acid chain: Small ribosomal subunit protein eS19 (147 aa).

Belongs to the eukaryotic ribosomal protein eS19 family. In terms of assembly, component of the small ribosomal subunit.

Its subcellular location is the cytoplasm. The protein localises to the nucleus. Functionally, component of the small ribosomal subunit. The ribosome is a large ribonucleoprotein complex responsible for the synthesis of proteins in the cell. Required for pre-rRNA processing and maturation of 40S ribosomal subunits. The sequence is that of Small ribosomal subunit protein eS19 (rps19) from Ictalurus punctatus (Channel catfish).